The primary structure comprises 164 residues: NADH-quinone oxidoreductase subunit I (164 aa).

2 4Fe-4S ferredoxin-type domains span residues 55-85 and 95-124; these read LRRYPNGEERCIACKLCEAVCPAQAITIDAE and TRYDIDMTKCIYCGFCQEACPVDAIVEGPN. Residues Cys-65, Cys-68, Cys-71, Cys-75, Cys-104, Cys-107, Cys-110, and Cys-114 each coordinate [4Fe-4S] cluster.

It belongs to the complex I 23 kDa subunit family. As to quaternary structure, NDH-1 is composed of 14 different subunits. Subunits NuoA, H, J, K, L, M, N constitute the membrane sector of the complex. [4Fe-4S] cluster is required as a cofactor.

It is found in the cell inner membrane. It catalyses the reaction a quinone + NADH + 5 H(+)(in) = a quinol + NAD(+) + 4 H(+)(out). Functionally, NDH-1 shuttles electrons from NADH, via FMN and iron-sulfur (Fe-S) centers, to quinones in the respiratory chain. The immediate electron acceptor for the enzyme in this species is believed to be ubiquinone. Couples the redox reaction to proton translocation (for every two electrons transferred, four hydrogen ions are translocated across the cytoplasmic membrane), and thus conserves the redox energy in a proton gradient. The protein is NADH-quinone oxidoreductase subunit I of Ruegeria sp. (strain TM1040) (Silicibacter sp.).